The following is a 522-amino-acid chain: Lysine--tRNA ligase (522 aa).

The short motif at 44–52 (PSGLPHIGT) is the 'HIGH' region element. A 'KMSKS' region motif is present at residues 290–294 (KISKS). Lys293 is a binding site for ATP.

This sequence belongs to the class-I aminoacyl-tRNA synthetase family.

It is found in the cytoplasm. The enzyme catalyses tRNA(Lys) + L-lysine + ATP = L-lysyl-tRNA(Lys) + AMP + diphosphate. The protein is Lysine--tRNA ligase of Rickettsia africae (strain ESF-5).